Reading from the N-terminus, the 68-residue chain is Large ribosomal subunit protein uL29 (68 aa).

This sequence belongs to the universal ribosomal protein uL29 family.

The protein is Large ribosomal subunit protein uL29 of Picosynechococcus sp. (strain ATCC 27264 / PCC 7002 / PR-6) (Agmenellum quadruplicatum).